The sequence spans 73 residues: MSLELLSKLETKIQATLETIELLKMELEEEKQKSSTLSEHNQQLNEQNQQLQQELASWNEKVTGLVGLLNSEI.

Residues 3 to 69 are a coiled coil; sequence LELLSKLETK…EKVTGLVGLL (67 aa). Residues 30–50 are disordered; sequence EKQKSSTLSEHNQQLNEQNQQ. Over residues 41–50 the composition is skewed to low complexity; the sequence is NQQLNEQNQQ.

The protein belongs to the ZapB family. Homodimer. The ends of the coiled-coil dimer bind to each other, forming polymers. Interacts with FtsZ.

Its subcellular location is the cytoplasm. Non-essential, abundant cell division factor that is required for proper Z-ring formation. It is recruited early to the divisome by direct interaction with FtsZ, stimulating Z-ring assembly and thereby promoting cell division earlier in the cell cycle. Its recruitment to the Z-ring requires functional FtsA or ZipA. The sequence is that of Cell division protein ZapB from Shewanella putrefaciens (strain CN-32 / ATCC BAA-453).